Consider the following 97-residue polypeptide: Large ribosomal subunit protein uL23 (97 aa).

The protein belongs to the universal ribosomal protein uL23 family. Part of the 50S ribosomal subunit. Contacts protein L29, and trigger factor when it is bound to the ribosome.

Functionally, one of the early assembly proteins it binds 23S rRNA. One of the proteins that surrounds the polypeptide exit tunnel on the outside of the ribosome. Forms the main docking site for trigger factor binding to the ribosome. This is Large ribosomal subunit protein uL23 from Methylococcus capsulatus (strain ATCC 33009 / NCIMB 11132 / Bath).